The primary structure comprises 267 residues: Interleukin-2 receptor subunit alpha (267 aa).

The N-terminal stretch at 1 to 21 (MEPHLLMLGFLSFTIVPGCWA) is a signal peptide. Residues 22–79 (ELCLYDPPEVPNATFKALSYKNGTILNCECKRGFRRLNELVYMACLGNSWSNNCQCTS) form the Sushi 1 domain. Residues 22–235 (ELCLYDPPEV…ETFVFTKEYQ (214 aa)) lie on the Extracellular side of the membrane. Disulfide bonds link C24/C66, C49/C75, and C51/C77. N-linked (GlcNAc...) asparagine glycosylation is found at N33 and N43. A compositionally biased stretch (polar residues) spans 82 to 93 (HDNSREQVTPQP). Residues 82-108 (HDNSREQVTPQPEGQKEQQTTDTQKST) are disordered. A compositionally biased stretch (low complexity) spans 98 to 108 (EQQTTDTQKST). A Sushi 2 domain is found at 118 to 181 (GHCREPPPWR…WTHPQLTCVD (64 aa)). Disulfide bonds link C120/C163 and C147/C179. Residues 191 to 215 (SEESQGSRNSFPESEASCPTPNTDF) form a disordered region. Residues 192–215 (EESQGSRNSFPESEASCPTPNTDF) are compositionally biased toward polar residues. The chain crosses the membrane as a helical span at residues 236 to 256 (VAVASCIFLLLSILLLSGFTW). Topologically, residues 257–267 (QHRWRKSRRTI) are cytoplasmic.

Non-covalent dimer of an alpha and a beta subunit. IL2R exists in 3 different forms: a high affinity dimer, an intermediate affinity monomer (beta subunit), and a low affinity monomer (alpha subunit). The high and intermediate affinity forms also associate with a gamma subunit.

It localises to the membrane. Its function is as follows. Receptor for interleukin-2. The receptor is involved in the regulation of immune tolerance by controlling regulatory T cells (TREGs) activity. TREGs suppress the activation and expansion of autoreactive T-cells. In Rattus norvegicus (Rat), this protein is Interleukin-2 receptor subunit alpha (Il2ra).